The following is a 160-amino-acid chain: MVEIKLVNKEIIKFGLALGIVNELNEYLYAAMPPMYDILSKLYGYGRTVNAMLYSVLFNLLESRIDTLRRLDLSKFFAVVAYMDAVKDTVELAINGYAYVTTSGFTVYPASQITGTYESDFSQAKAVPANTTATQVWFAPKKFALITQNKIYTFLAPYWF.

It localises to the virion. The polypeptide is Coat protein TP3 (Thermoproteus tenax (TTV1)).